The following is a 95-amino-acid chain: Turripeptide OL184 (95 aa).

Post-translationally, contains 5 disulfide bonds. As to expression, expressed by the venom duct.

Its subcellular location is the secreted. In terms of biological role, acts as a neurotoxin by inhibiting an ion channel. This chain is Turripeptide OL184, found in Iotyrris olangoensis (Sea snail).